A 138-amino-acid polypeptide reads, in one-letter code: Nucleoside diphosphate kinase (138 aa).

ATP-binding residues include Lys11, Phe59, Arg87, Thr93, Arg104, and Asn114. The active-site Pros-phosphohistidine intermediate is His117.

Belongs to the NDK family. Requires Mg(2+) as cofactor.

The protein resides in the cytoplasm. The catalysed reaction is a 2'-deoxyribonucleoside 5'-diphosphate + ATP = a 2'-deoxyribonucleoside 5'-triphosphate + ADP. It catalyses the reaction a ribonucleoside 5'-diphosphate + ATP = a ribonucleoside 5'-triphosphate + ADP. Major role in the synthesis of nucleoside triphosphates other than ATP. The ATP gamma phosphate is transferred to the NDP beta phosphate via a ping-pong mechanism, using a phosphorylated active-site intermediate. This is Nucleoside diphosphate kinase from Saccharolobus solfataricus (strain ATCC 35092 / DSM 1617 / JCM 11322 / P2) (Sulfolobus solfataricus).